We begin with the raw amino-acid sequence, 295 residues long: Putative clathrin assembly protein At5g65370 (295 aa).

One can recognise an ENTH domain in the interval 26 to 169; the sequence is CSSVNAKTID…SIAEVLGITP (144 aa).

Its subcellular location is the membrane. The protein resides in the clathrin-coated pit. The protein localises to the golgi apparatus. It is found in the cytoplasmic vesicle. It localises to the clathrin-coated vesicle. The polypeptide is Putative clathrin assembly protein At5g65370 (Arabidopsis thaliana (Mouse-ear cress)).